We begin with the raw amino-acid sequence, 376 residues long: uncharacterized protein (376 aa).

The protein belongs to the YCR102c/YLR460c/YNL134c family.

This is an uncharacterized protein from Saccharomyces cerevisiae (strain ATCC 204508 / S288c) (Baker's yeast).